A 414-amino-acid polypeptide reads, in one-letter code: Glutamyl-tRNA reductase (414 aa).

Residues 51 to 54 (TCNR), Ser107, 112 to 114 (EYE), and Gln118 contribute to the substrate site. Cys52 acts as the Nucleophile in catalysis. Residue 187 to 192 (GAGEIG) coordinates NADP(+).

It belongs to the glutamyl-tRNA reductase family. In terms of assembly, homodimer.

It carries out the reaction (S)-4-amino-5-oxopentanoate + tRNA(Glu) + NADP(+) = L-glutamyl-tRNA(Glu) + NADPH + H(+). The protein operates within porphyrin-containing compound metabolism; protoporphyrin-IX biosynthesis; 5-aminolevulinate from L-glutamyl-tRNA(Glu): step 1/2. Functionally, catalyzes the NADPH-dependent reduction of glutamyl-tRNA(Glu) to glutamate 1-semialdehyde (GSA). This Sulfolobus acidocaldarius (strain ATCC 33909 / DSM 639 / JCM 8929 / NBRC 15157 / NCIMB 11770) protein is Glutamyl-tRNA reductase.